The primary structure comprises 176 residues: MLQASKQWQWISCAKKNRLLLDLNEDMQLCTPYKLRQLTDSTFKNPYFSLEDAAFYEQVYQYLVQFKLWNPAQLCQISLNATAVKFQLKPVLAKSWFFEQYTGSTPSTEAVINLTSKAQSGEFLIVEHSSDASVCINLSENFQLDDNLSLVQFEAIRVLNNRVHPLLNQHIHSKIA.

It belongs to the ZapC family. As to quaternary structure, interacts directly with FtsZ.

Its subcellular location is the cytoplasm. Contributes to the efficiency of the cell division process by stabilizing the polymeric form of the cell division protein FtsZ. Acts by promoting interactions between FtsZ protofilaments and suppressing the GTPase activity of FtsZ. The chain is Cell division protein ZapC from Pseudoalteromonas translucida (strain TAC 125).